The primary structure comprises 239 residues: Chaperone protein PapD (239 aa).

A signal peptide spans 1-21 (MIRKKILMAAIPLFVISGADA). The cysteines at positions 228 and 233 are disulfide-linked.

Belongs to the periplasmic pilus chaperone family. In terms of assembly, interacts with substrates PapG and PapK.

The protein resides in the periplasm. Functionally, binds and caps interactive surfaces on P pilus subunits to prevent them from participating in non-productive interactions. Facilitates the import of P pilus subunits into the periplasm, probably also facilitates their folding. Chaperone-subunit complexes are then targeted to the PapC outer membrane usher where the chaperone must uncap from the subunits. Coexpression of this chaperone with individual, otherwise toxic, P pilus subunits (tested with PapA, PapE and PapG) suppresses their growth inhibitory phenotype. This is Chaperone protein PapD (papD) from Escherichia coli.